The primary structure comprises 232 residues: Lipoprotein-releasing system ATP-binding protein LolD (232 aa).

Positions 11–231 constitute an ABC transporter domain; that stretch reads VYLHDIKRQY…SIEDGVIVEL (221 aa). Residue 47–54 coordinates ATP; the sequence is APSGSGKS.

The protein belongs to the ABC transporter superfamily. Lipoprotein translocase (TC 3.A.1.125) family. The complex is composed of two ATP-binding proteins (LolD) and two transmembrane proteins (LolC and LolE).

It is found in the cell inner membrane. Its function is as follows. Part of the ABC transporter complex LolCDE involved in the translocation of mature outer membrane-directed lipoproteins, from the inner membrane to the periplasmic chaperone, LolA. Responsible for the formation of the LolA-lipoprotein complex in an ATP-dependent manner. In Rhodopseudomonas palustris (strain BisB5), this protein is Lipoprotein-releasing system ATP-binding protein LolD.